Here is a 754-residue protein sequence, read N- to C-terminus: uncharacterized protein (754 aa).

Catalysis depends on charge relay system residues serine 585 and histidine 707. Positions serine 733–arginine 754 are disordered.

Belongs to the peptidase S9A family.

This is an uncharacterized protein from Sinorhizobium fredii (strain NBRC 101917 / NGR234).